We begin with the raw amino-acid sequence, 284 residues long: 3-methyl-2-oxobutanoate hydroxymethyltransferase (284 aa).

Residues aspartate 44 and aspartate 83 each contribute to the Mg(2+) site. Residues 44-45 (DS), aspartate 83, and lysine 112 each bind 3-methyl-2-oxobutanoate. Glutamate 114 serves as a coordination point for Mg(2+). Glutamate 181 acts as the Proton acceptor in catalysis.

Belongs to the PanB family. Homodecamer; pentamer of dimers. The cofactor is Mg(2+).

The protein resides in the cytoplasm. It catalyses the reaction 3-methyl-2-oxobutanoate + (6R)-5,10-methylene-5,6,7,8-tetrahydrofolate + H2O = 2-dehydropantoate + (6S)-5,6,7,8-tetrahydrofolate. Its pathway is cofactor biosynthesis; coenzyme A biosynthesis. Neither activated nor inhibited by coenzyme A. Its function is as follows. Catalyzes the reversible reaction in which hydroxymethyl group from 5,10-methylenetetrahydrofolate is transferred onto alpha-ketoisovalerate to form ketopantoate. The sequence is that of 3-methyl-2-oxobutanoate hydroxymethyltransferase from Thermococcus kodakarensis (strain ATCC BAA-918 / JCM 12380 / KOD1) (Pyrococcus kodakaraensis (strain KOD1)).